The following is a 237-amino-acid chain: BTB/POZ domain-containing protein KCTD6 (237 aa).

Residues 12–81 (HPVTLNVGGH…LRTSELTLPV (70 aa)) form the BTB domain.

In terms of assembly, homopentamer. May be part of a cullin-containing E3 ubiquitin-protein ligase complex.

Its pathway is protein modification; protein ubiquitination. Probable substrate-specific adapter of a cullin-containing E3 ubiquitin-protein ligase complex mediating the ubiquitination and subsequent proteasomal degradation of target proteins. This is BTB/POZ domain-containing protein KCTD6 (kctd6) from Danio rerio (Zebrafish).